The sequence spans 481 residues: Argininosuccinate lyase (481 aa).

It belongs to the lyase 1 family. Argininosuccinate lyase subfamily.

The protein localises to the cytoplasm. It catalyses the reaction 2-(N(omega)-L-arginino)succinate = fumarate + L-arginine. It functions in the pathway amino-acid biosynthesis; L-arginine biosynthesis; L-arginine from L-ornithine and carbamoyl phosphate: step 3/3. In Methanococcus maripaludis (strain C5 / ATCC BAA-1333), this protein is Argininosuccinate lyase.